The primary structure comprises 164 residues: Proline-rich protein 2 (164 aa).

The N-terminal stretch at 1–21 (MNLKVGIAVLIIALIVPSAQP) is a signal peptide.

In terms of tissue distribution, component of the acid-soluble organic matrix of calcified layers of the shell (at protein level).

Its subcellular location is the secreted. The chain is Proline-rich protein 2 from Lottia gigantea (Giant owl limpet).